We begin with the raw amino-acid sequence, 142 residues long: Hemoglobin subunit alpha-1 (142 aa).

The Globin domain occupies 2–142 (KLTAEDKHNV…VAYVLASKYR (141 aa)). An O2-binding site is contributed by histidine 59. Histidine 88 is a heme b binding site.

The protein belongs to the globin family. Major hemoglobin is a heterotetramer of two alpha-1 chains and two beta-1 chains. As to expression, red blood cells.

Its function is as follows. Involved in oxygen transport from the lung to the various peripheral tissues. The polypeptide is Hemoglobin subunit alpha-1 (Pleurodeles waltl (Iberian ribbed newt)).